The sequence spans 262 residues: Adenosylcobinamide-GDP ribazoletransferase (262 aa).

The next 6 membrane-spanning stretches (helical) occupy residues 43 to 63 (YFGL…WLTQ), 66 to 86 (LPAG…TGGF), 120 to 140 (GALA…ELAL), 146 to 166 (AGSA…SIIF), 191 to 211 (LLIL…LAAL), and 242 to 262 (AAQQ…GNIL).

Belongs to the CobS family. Mg(2+) serves as cofactor.

It is found in the cell inner membrane. The enzyme catalyses alpha-ribazole + adenosylcob(III)inamide-GDP = adenosylcob(III)alamin + GMP + H(+). The catalysed reaction is alpha-ribazole 5'-phosphate + adenosylcob(III)inamide-GDP = adenosylcob(III)alamin 5'-phosphate + GMP + H(+). The protein operates within cofactor biosynthesis; adenosylcobalamin biosynthesis; adenosylcobalamin from cob(II)yrinate a,c-diamide: step 7/7. In terms of biological role, joins adenosylcobinamide-GDP and alpha-ribazole to generate adenosylcobalamin (Ado-cobalamin). Also synthesizes adenosylcobalamin 5'-phosphate from adenosylcobinamide-GDP and alpha-ribazole 5'-phosphate. This chain is Adenosylcobinamide-GDP ribazoletransferase, found in Shewanella baltica (strain OS185).